Consider the following 275-residue polypeptide: 4-hydroxy-tetrahydrodipicolinate reductase (275 aa).

NAD(+) contacts are provided by residues 13–18 (GAAGKM), 108–110 (GTT), and 134–137 (APNF). Residue His164 is the Proton donor/acceptor of the active site. (S)-2,3,4,5-tetrahydrodipicolinate is bound at residue His165. The Proton donor role is filled by Lys168. Residue 174 to 175 (GT) coordinates (S)-2,3,4,5-tetrahydrodipicolinate.

It belongs to the DapB family.

It is found in the cytoplasm. It carries out the reaction (S)-2,3,4,5-tetrahydrodipicolinate + NAD(+) + H2O = (2S,4S)-4-hydroxy-2,3,4,5-tetrahydrodipicolinate + NADH + H(+). It catalyses the reaction (S)-2,3,4,5-tetrahydrodipicolinate + NADP(+) + H2O = (2S,4S)-4-hydroxy-2,3,4,5-tetrahydrodipicolinate + NADPH + H(+). It participates in amino-acid biosynthesis; L-lysine biosynthesis via DAP pathway; (S)-tetrahydrodipicolinate from L-aspartate: step 4/4. In terms of biological role, catalyzes the conversion of 4-hydroxy-tetrahydrodipicolinate (HTPA) to tetrahydrodipicolinate. In Synechocystis sp. (strain ATCC 27184 / PCC 6803 / Kazusa), this protein is 4-hydroxy-tetrahydrodipicolinate reductase.